A 521-amino-acid chain; its full sequence is MNKLVNKNIFINKNNSLKNFVNNYSTKTNNNNNNIFNKNKNDLKSFSSSSKLNNNNNNNNKYEESKLMNAEDLILNQIKISKSPFVKIAGSDIDGILRGKYLDKSKFESSIKKGLGFCSVIFGWDSSDSAYDNVKFTGNHTGYPDMGARPDLSTFRTIPWEYDVPLFLMDFIGTNGEPLPICPRSTLKKVIKKCHEHQFDPVQGMEFEWYNYSENNKSLLNKNFSNLEPLSNGMFGYSLLRTSQNSEFMNSLAELQGFGVPLEGLHTETGPGVYEAAIRFSTALESADRAILFKHCTKEIASLQGIMASFMAKPFKDLPGCSGHMHQNFNCLKTGKNLFLDESDPNHMSDIFKSFVAGQLLLLPEFLPFFAPTINSYKRLVDGYWAPTTPTWGMDNRTVALRIIKGGKATRSEFRVTGSDVNPYISIAASFAAGLYGVINKLELKQKPIIGNSYDLYKKGLVERLPRSLAESTELLSKSKIAKEYLGEEFVDHFVETRRWEYRQFNHQVHKWELERYLEII.

Residues 76 to 176 (NQIKISKSPF…FLMDFIGTNG (101 aa)) form the GS beta-grasp domain. One can recognise a GS catalytic domain in the interval 183-521 (PRSTLKKVIK…WELERYLEII (339 aa)).

Belongs to the glutamine synthetase family.

It carries out the reaction L-glutamate + NH4(+) + ATP = L-glutamine + ADP + phosphate + H(+). This Dictyostelium discoideum (Social amoeba) protein is Type-1 glutamine synthetase 2 (glnA2).